Reading from the N-terminus, the 250-residue chain is 2,3-bisphosphoglycerate-dependent phosphoglycerate mutase (250 aa).

Substrate is bound by residues 10–17 (RHGESQWN), 23–24 (TG), R62, 89–92 (ERHY), K100, 116–117 (RR), and 185–186 (GN). The active-site Tele-phosphohistidine intermediate is the H11. E89 acts as the Proton donor/acceptor in catalysis.

The protein belongs to the phosphoglycerate mutase family. BPG-dependent PGAM subfamily. As to quaternary structure, homodimer.

The catalysed reaction is (2R)-2-phosphoglycerate = (2R)-3-phosphoglycerate. It functions in the pathway carbohydrate degradation; glycolysis; pyruvate from D-glyceraldehyde 3-phosphate: step 3/5. In terms of biological role, catalyzes the interconversion of 2-phosphoglycerate and 3-phosphoglycerate. The protein is 2,3-bisphosphoglycerate-dependent phosphoglycerate mutase of Pectobacterium atrosepticum (strain SCRI 1043 / ATCC BAA-672) (Erwinia carotovora subsp. atroseptica).